The following is a 62-amino-acid chain: Protein DsrB (62 aa).

It belongs to the DsrB family.

The chain is Protein DsrB from Shigella boydii serotype 18 (strain CDC 3083-94 / BS512).